Here is a 504-residue protein sequence, read N- to C-terminus: Glucose-6-phosphate isomerase (504 aa).

Catalysis depends on Glu-333, which acts as the Proton donor. Active-site residues include His-364 and Lys-473.

This sequence belongs to the GPI family.

The protein localises to the cytoplasm. It carries out the reaction alpha-D-glucose 6-phosphate = beta-D-fructose 6-phosphate. It functions in the pathway carbohydrate biosynthesis; gluconeogenesis. It participates in carbohydrate degradation; glycolysis; D-glyceraldehyde 3-phosphate and glycerone phosphate from D-glucose: step 2/4. Its function is as follows. Catalyzes the reversible isomerization of glucose-6-phosphate to fructose-6-phosphate. The polypeptide is Glucose-6-phosphate isomerase (Stenotrophomonas maltophilia (strain K279a)).